Here is a 309-residue protein sequence, read N- to C-terminus: Ornithine carbamoyltransferase (309 aa).

Carbamoyl phosphate is bound by residues 51–54, glutamine 78, arginine 102, and 129–132; these read STRT and HPVQ. L-ornithine contacts are provided by residues asparagine 160, aspartate 224, and 228–229; that span reads SM. Carbamoyl phosphate contacts are provided by residues 264-265 and arginine 292; that span reads CL.

The protein belongs to the aspartate/ornithine carbamoyltransferase superfamily. OTCase family.

It localises to the cytoplasm. It catalyses the reaction carbamoyl phosphate + L-ornithine = L-citrulline + phosphate + H(+). The protein operates within amino-acid biosynthesis; L-arginine biosynthesis; L-arginine from L-ornithine and carbamoyl phosphate: step 1/3. Its function is as follows. Reversibly catalyzes the transfer of the carbamoyl group from carbamoyl phosphate (CP) to the N(epsilon) atom of ornithine (ORN) to produce L-citrulline. The polypeptide is Ornithine carbamoyltransferase (Campylobacter fetus subsp. fetus (strain 82-40)).